The following is a 147-amino-acid chain: Small ribosomal subunit protein uS12 (147 aa).

It belongs to the universal ribosomal protein uS12 family. In terms of assembly, part of the 30S ribosomal subunit.

Functionally, with S4 and S5 plays an important role in translational accuracy. Located at the interface of the 30S and 50S subunits. The polypeptide is Small ribosomal subunit protein uS12 (Thermococcus celer).